The sequence spans 510 residues: UDP-N-acetylmuramate--L-alanine ligase (510 aa).

The segment at 1-25 is disordered; the sequence is MVETVGGKDAVAPAPARSPSPPAKN. 140-146 lines the ATP pocket; it reads GTHGKTT.

Belongs to the MurCDEF family.

It is found in the cytoplasm. The catalysed reaction is UDP-N-acetyl-alpha-D-muramate + L-alanine + ATP = UDP-N-acetyl-alpha-D-muramoyl-L-alanine + ADP + phosphate + H(+). It functions in the pathway cell wall biogenesis; peptidoglycan biosynthesis. In terms of biological role, cell wall formation. This chain is UDP-N-acetylmuramate--L-alanine ligase, found in Synechococcus sp. (strain JA-3-3Ab) (Cyanobacteria bacterium Yellowstone A-Prime).